We begin with the raw amino-acid sequence, 600 residues long: Probable tripeptidyl-peptidase SED4 (600 aa).

A signal peptide spans 1 to 22 (MVSFTLRAIGACLIGLPALITA). Positions 23 to 202 (APTSHVSNDF…SVFTSDLEIT (180 aa)) are cleaved as a propeptide — removed in mature form. 2 N-linked (GlcNAc...) asparagine glycosylation sites follow: Asn210 and Asn281. In terms of domain architecture, Peptidase S53 spans 212-600 (TITPDCIREL…FEKLSKLVLI (389 aa)). Residues Glu288 and Asp292 each act as charge relay system in the active site. Asn323 and Asn404 each carry an N-linked (GlcNAc...) asparagine glycan. Residue Ser504 is the Charge relay system of the active site. Residues Asp546 and Ile547 each coordinate Ca(2+). N-linked (GlcNAc...) asparagine glycosylation occurs at Asn575. Ca(2+)-binding residues include Gly579 and Asp581.

Ca(2+) serves as cofactor.

The protein localises to the secreted. Its subcellular location is the extracellular space. It carries out the reaction Release of an N-terminal tripeptide from a polypeptide.. Secreted tripeptidyl-peptidase which degrades proteins at acidic pHs and is involved in virulence. This is Probable tripeptidyl-peptidase SED4 (SED4) from Arthroderma benhamiae (strain ATCC MYA-4681 / CBS 112371) (Trichophyton mentagrophytes).